A 66-amino-acid chain; its full sequence is MILVNVHAGNCDNTLKNFKKKLQRELYFRKMKEQRYYETPSAKRVRKVQEAARRQRKFARKKMFDE.

Belongs to the bacterial ribosomal protein bS21 family.

The chain is Small ribosomal subunit protein bS21 from Rickettsia africae (strain ESF-5).